The sequence spans 95 residues: Co-chaperonin GroES (95 aa).

Belongs to the GroES chaperonin family. As to quaternary structure, heptamer of 7 subunits arranged in a ring. Interacts with the chaperonin GroEL.

The protein resides in the cytoplasm. In terms of biological role, together with the chaperonin GroEL, plays an essential role in assisting protein folding. The GroEL-GroES system forms a nano-cage that allows encapsulation of the non-native substrate proteins and provides a physical environment optimized to promote and accelerate protein folding. GroES binds to the apical surface of the GroEL ring, thereby capping the opening of the GroEL channel. In Streptococcus thermophilus (strain ATCC BAA-491 / LMD-9), this protein is Co-chaperonin GroES.